Here is a 436-residue protein sequence, read N- to C-terminus: Putative ankyrin repeat protein FPV026 (436 aa).

6 ANK repeats span residues 63 to 92 (EGIR…NVNE), 101 to 130 (TCYS…DVNN), 135 to 164 (LRNT…DQNI), 168 to 197 (NGNI…NLEI), 201 to 230 (NGRT…LVDS), and 234 to 266 (EGYT…FLNI). Positions 409–436 (TSTITNLPYEVIYIIVEKMTNKELCEIR) constitute an F-box domain.

The polypeptide is Putative ankyrin repeat protein FPV026 (Fowlpox virus (strain NVSL) (FPV)).